We begin with the raw amino-acid sequence, 498 residues long: MAKYVMALDQGTTSSRCIIFNERGLIVSVAQREFKQIYPKGGWVEHDPMEIWATQFSVATEAMAKANIEASEIASIGITNQRETTIVWDKRTGLPVYNAIVWQCRRTAQICDELKEKGLTETIRNKTGLVLDAYFSGTKIKWILDNVAGAREEAEKGNLIFGTVDTWLIWNLTKGKVHVTDYSNASRTMIYNIHELKWDDELLEALDIPKSMLPEVKPSSYVYGETNSTLFGSSIPIAGVAGDQQAALFGQMCHQEGTAKSTYGTGCFLLMNTGEKAVKSENGLLTTIAFGIDDKVEYALEGSIFIGGAAIQWLRDELRMLKDSPESERYATAVEDTNGVYMVPAFVGLGAPYWDPYARGAIVGLTRGATKEHFIRATLESLAYQTYDVLNAMREDSGIDLKALRVDGGASANDFLMQFQADILGVPVQRPEVIETTALGAAYLAGLAVGYWKDKKDVAQNWAISKTFEPDMIKERREELLEGWHEAVKRSMNWEKSE.

ADP is bound at residue Thr12. ATP contacts are provided by Thr12, Thr13, and Ser14. Thr12 contributes to the sn-glycerol 3-phosphate binding site. Arg16 lines the ADP pocket. Sn-glycerol 3-phosphate-binding residues include Arg82, Glu83, Tyr134, and Asp243. 5 residues coordinate glycerol: Arg82, Glu83, Tyr134, Asp243, and Gln244. Positions 265 and 308 each coordinate ADP. ATP-binding residues include Thr265, Gly308, Gln312, and Gly409. ADP-binding residues include Gly409 and Asn413.

Belongs to the FGGY kinase family. As to quaternary structure, homotetramer and homodimer (in equilibrium).

The catalysed reaction is glycerol + ATP = sn-glycerol 3-phosphate + ADP + H(+). It participates in polyol metabolism; glycerol degradation via glycerol kinase pathway; sn-glycerol 3-phosphate from glycerol: step 1/1. With respect to regulation, activated by phosphorylation and inhibited by fructose 1,6-bisphosphate (FBP). Key enzyme in the regulation of glycerol uptake and metabolism. Catalyzes the phosphorylation of glycerol to yield sn-glycerol 3-phosphate. This is Glycerol kinase 1 from Clostridium tetani (strain Massachusetts / E88).